We begin with the raw amino-acid sequence, 382 residues long: Alkanesulfonate monooxygenase (382 aa).

This sequence belongs to the SsuD family.

The enzyme catalyses an alkanesulfonate + FMNH2 + O2 = an aldehyde + FMN + sulfite + H2O + 2 H(+). In terms of biological role, catalyzes the desulfonation of aliphatic sulfonates. The sequence is that of Alkanesulfonate monooxygenase from Pseudomonas putida (strain ATCC 47054 / DSM 6125 / CFBP 8728 / NCIMB 11950 / KT2440).